The sequence spans 363 residues: Phospho-N-acetylmuramoyl-pentapeptide-transferase (363 aa).

11 helical membrane-spanning segments follow: residues 27–47, 76–96, 97–117, 137–157, 171–191, 202–222, 226–246, 248–268, 271–291, 292–312, and 340–360; these read AGAA…PLIA, TMGG…WADL, TDGY…VGFA, LGCE…LMPA, WLLP…TGFG, GLAI…SYLV, VFAD…CVFC, ALVG…AVFM, TGSL…KHEL, VLCI…IQVF, and KIVI…LATL.

Belongs to the glycosyltransferase 4 family. MraY subfamily. The cofactor is Mg(2+).

The protein localises to the cell inner membrane. It catalyses the reaction UDP-N-acetyl-alpha-D-muramoyl-L-alanyl-gamma-D-glutamyl-meso-2,6-diaminopimeloyl-D-alanyl-D-alanine + di-trans,octa-cis-undecaprenyl phosphate = di-trans,octa-cis-undecaprenyl diphospho-N-acetyl-alpha-D-muramoyl-L-alanyl-D-glutamyl-meso-2,6-diaminopimeloyl-D-alanyl-D-alanine + UMP. Its pathway is cell wall biogenesis; peptidoglycan biosynthesis. Catalyzes the initial step of the lipid cycle reactions in the biosynthesis of the cell wall peptidoglycan: transfers peptidoglycan precursor phospho-MurNAc-pentapeptide from UDP-MurNAc-pentapeptide onto the lipid carrier undecaprenyl phosphate, yielding undecaprenyl-pyrophosphoryl-MurNAc-pentapeptide, known as lipid I. The polypeptide is Phospho-N-acetylmuramoyl-pentapeptide-transferase (Gluconacetobacter diazotrophicus (strain ATCC 49037 / DSM 5601 / CCUG 37298 / CIP 103539 / LMG 7603 / PAl5)).